Here is a 1125-residue protein sequence, read N- to C-terminus: Probable inorganic carbon transporter subunit DabA (1125 aa).

Zn(2+)-binding residues include cysteine 578, aspartate 580, histidine 769, and cysteine 784. The segment at 1106-1125 (SDPRPPALVEPKQTETHHAA) is disordered.

The protein belongs to the inorganic carbon transporter (TC 9.A.2) DabA family. As to quaternary structure, forms a complex with DabB. Requires Zn(2+) as cofactor.

The protein resides in the cell inner membrane. Its function is as follows. Part of an energy-coupled inorganic carbon pump. This Nitrosococcus oceani (strain ATCC 19707 / BCRC 17464 / JCM 30415 / NCIMB 11848 / C-107) protein is Probable inorganic carbon transporter subunit DabA.